A 163-amino-acid polypeptide reads, in one-letter code: Protein-export protein SecB (163 aa).

The protein belongs to the SecB family. As to quaternary structure, homotetramer, a dimer of dimers. One homotetramer interacts with 1 SecA dimer.

It is found in the cytoplasm. One of the proteins required for the normal export of preproteins out of the cell cytoplasm. It is a molecular chaperone that binds to a subset of precursor proteins, maintaining them in a translocation-competent state. It also specifically binds to its receptor SecA. The chain is Protein-export protein SecB from Brucella anthropi (strain ATCC 49188 / DSM 6882 / CCUG 24695 / JCM 21032 / LMG 3331 / NBRC 15819 / NCTC 12168 / Alc 37) (Ochrobactrum anthropi).